We begin with the raw amino-acid sequence, 364 residues long: Spermidine/putrescine import ATP-binding protein PotA (364 aa).

An ABC transporter domain is found at 5–235 (LSLKSVSKSY…PVNRFVADFI (231 aa)). ATP is bound at residue 37–44 (GPSGCGKT).

The protein belongs to the ABC transporter superfamily. Spermidine/putrescine importer (TC 3.A.1.11.1) family. The complex is composed of two ATP-binding proteins (PotA), two transmembrane proteins (PotB and PotC) and a solute-binding protein (PotD).

It localises to the cell membrane. It catalyses the reaction ATP + H2O + polyamine-[polyamine-binding protein]Side 1 = ADP + phosphate + polyamineSide 2 + [polyamine-binding protein]Side 1.. Its function is as follows. Part of the ABC transporter complex PotABCD involved in spermidine/putrescine import. Responsible for energy coupling to the transport system. The protein is Spermidine/putrescine import ATP-binding protein PotA of Staphylococcus aureus (strain USA300).